Here is a 114-residue protein sequence, read N- to C-terminus: Protein ORF3 (114 aa).

Hydrophobic regions lie at residues 6–22 (CALG…CLCC) and 33–53 (AVVG…GLIL). The segment at 28-68 (VSRLAAVVGGAAAVPAVVSGVTGLILSPSQSPIFIQPTPSP) is interaction with host HPX. The interaction with the capsid protein stretch occupies residues 48 to 72 (VTGLILSPSQSPIFIQPTPSPPMSP). A Phosphoserine; by host modification is found at S71. Residues 72 to 114 (PLRPGLDLVFANPPDHSAPLGVTRPSAPPLPHVVDLPQLGPRR) form a homodimerization, and interaction with host AMBP/bikunin region. Residues 91 to 114 (LGVTRPSAPPLPHVVDLPQLGPRR) form a disordered region. The tract at residues 95–104 (RPSAPPLPHV) is interaction with host SRC, HCK, FYN, PIK3R3 and GRB2. The PTAP/PSAP motif motif lies at 96–99 (PSAP).

Belongs to the hepevirus ORF3 protein family. In terms of assembly, forms homooligomers. Interacts with host SRC, HCK, FYN, PIK3R3 and GRB2 (via SH3 domain); binding does not activate the kinases. Interacts with host AMBP/bikunin and AMBP/alpha-1-microglobulin peptides. Interacts with host HPX/hemopexin. Interacts (when phosphorylated) with capsid protein ORF2. Interacts with host TSG101; this interaction plays a role in viral release from the host cell. Interacts with host SIRPA; this interaction down-regulates the phosphorylation of host IRF3. Post-translationally, palmitoylated in the N-terminus.

The protein localises to the host endoplasmic reticulum membrane. Its subcellular location is the host cytoplasm. The protein resides in the host cytoskeleton. It localises to the virion. It is found in the host cell membrane. Its function is as follows. Small multifunctional phosphoprotein involved in virion morphogenesis, egress and counteracting host innate immunity. Plays critical roles in the final steps of viral release by interacting with host TSG101, a member of the vacuolar protein-sorting pathway and using other cellular host proteins involved in vesicle formation pathway. Also acts as a viroporin and forms ion conductive pores allowing viral particle release. Impairs the generation of type I interferon by down-regulating host TLR3 and TLR7 as well as their downstream signaling pathways. Down-regulates the phosphorylation of host IRF3 via the interaction with host SIRP-alpha, thereby inhibiting IFN-I expression. Interacts with host microtubules. The protein is Protein ORF3 of Hepatitis E virus genotype 1 (isolate Human/Burma) (HEV-1).